Consider the following 265-residue polypeptide: 5'-nucleotidase SurE (265 aa).

Residues aspartate 8, aspartate 9, serine 39, and asparagine 96 each contribute to the a divalent metal cation site.

It belongs to the SurE nucleotidase family. A divalent metal cation is required as a cofactor.

It localises to the cytoplasm. The catalysed reaction is a ribonucleoside 5'-phosphate + H2O = a ribonucleoside + phosphate. Nucleotidase that shows phosphatase activity on nucleoside 5'-monophosphates. The polypeptide is 5'-nucleotidase SurE (Dehalococcoides mccartyi (strain ATCC BAA-2100 / JCM 16839 / KCTC 5957 / BAV1)).